We begin with the raw amino-acid sequence, 160 residues long: Adenosine 5'-monophosphoramidase HINT3 (160 aa).

One can recognise an HIT domain in the interval Ile24–Trp132. Residues Asp50–Ile51 and His119–His121 each bind AMP. The Histidine triad motif motif lies at His117–His121. The active-site Tele-AMP-histidine intermediate is His119.

This sequence belongs to the HINT family. As to quaternary structure, forms dimers to octamers and even larger oligomer.

Its subcellular location is the cytoplasm. It is found in the nucleus. It carries out the reaction adenosine 5'-phosphoramidate + H2O = AMP + NH4(+). Functionally, exhibits adenosine 5'-monophosphoramidase activity, hydrolyzing purine nucleotide phosphoramidates with a single phosphate group such as adenosine 5'monophosphoramidate (AMP-NH2) to yield AMP and NH2. Hydrolyzes lysyl-AMP (AMP-N-epsilon-(N-alpha-acetyl lysine methyl ester)) generated by lysine tRNA ligase. The sequence is that of Adenosine 5'-monophosphoramidase HINT3 (hint3) from Danio rerio (Zebrafish).